The following is a 699-amino-acid chain: Cell pattern formation-associated protein StuA (699 aa).

Disordered regions lie at residues 1-20 and 31-97; these read MDGT…LLAP and TPQF…QPEH. Over residues 32–49 the composition is skewed to low complexity; the sequence is PQFKSQQSQPQSQSQYPS. Residues 52–61 are compositionally biased toward polar residues; sequence NPDSYSSSSP. Positions 75–84 are enriched in acidic residues; it reads EDGEDYDQEE. The HTH APSES-type domain occupies 226–332; it reads RVTATLWEDE…HNIGALLYHP (107 aa). Positions 260–281 form a DNA-binding region, H-T-H motif; the sequence is GTKLLNVAGMTRGRRDGILKSE. Disordered stretches follow at residues 372 to 594, 599 to 618, and 674 to 699; these read AMPT…MNSM, RRDD…DLNN, and PSYP…QSFG. Residues 376–423 show a composition bias toward polar residues; the sequence is GYTSQQPLTNGHQSMANTPQPLTNGSQPPMNGSQTPMNGPQPPMQNGG. Basic and acidic residues-rich tracts occupy residues 428-438 and 478-491; these read RVREDDDDLHR and GLKR…DMHR. The segment covering 520–529 has biased composition (polar residues); sequence NLHQPLSNGD. Over residues 535–545 the composition is skewed to basic and acidic residues; the sequence is RGRDDDDDVHR. Residues 566–594 are compositionally biased toward polar residues; the sequence is TSTSNDMLPQSPYYTLSNGAYQGPMMNSM. Positions 669 to 695 are nuclear localization domain; the sequence is TVAVSPSYPAGPGYELARPVTNVPRRQ.

Belongs to the EFG1/PHD1/stuA family.

Its subcellular location is the nucleus. Functionally, transcription factor that regulates asexual reproduction. Binds the StuA-response elements (StRE) with the consensus sequence 5'-(A/T)CGCG(T/A)N(A/C)-3' at the promoters of target genes. Controls the expression of the gene clusters involved in the production of deoxynivalenol (DON) and 15-acetyldeoxynivalenol (15ADON). Regulates the expression of genes involved in chitin and glucan metabolism. Also controls catalase activity and cell surface hydrophobicity. Plays an important role in pathogenicity. This chain is Cell pattern formation-associated protein StuA, found in Gibberella zeae (strain ATCC MYA-4620 / CBS 123657 / FGSC 9075 / NRRL 31084 / PH-1) (Wheat head blight fungus).